We begin with the raw amino-acid sequence, 397 residues long: Stearoyl-[acyl-carrier-protein] 9-desaturase, chloroplastic (397 aa).

The transit peptide at 1 to 33 (MALNFNAIASKSQKLPCFALPPKATLRSPKFSM) directs the protein to the chloroplast. Fe cation is bound by residues Glu-138, Glu-176, His-179, Glu-229, Glu-262, and His-265.

The protein belongs to the fatty acid desaturase type 2 family. As to quaternary structure, homodimer. Fe(2+) is required as a cofactor.

It localises to the plastid. The protein localises to the chloroplast. The enzyme catalyses octadecanoyl-[ACP] + 2 reduced [2Fe-2S]-[ferredoxin] + O2 + 2 H(+) = (9Z)-octadecenoyl-[ACP] + 2 oxidized [2Fe-2S]-[ferredoxin] + 2 H2O. It participates in lipid metabolism; fatty acid metabolism. In terms of biological role, converts stearoyl-ACP to oleoyl-ACP by introduction of a cis double bond between carbons 9 and 10 of the acyl chain. The polypeptide is Stearoyl-[acyl-carrier-protein] 9-desaturase, chloroplastic (Gossypium hirsutum (Upland cotton)).